The following is a 529-amino-acid chain: Peptide chain release factor 3 (529 aa).

The region spanning 11-280 (AKRRTFAIIS…GLVEWAPAPM (270 aa)) is the tr-type G domain. Residues 20–27 (SHPDAGKT), 88–92 (DTPGH), and 142–145 (NKLD) contribute to the GTP site.

It belongs to the TRAFAC class translation factor GTPase superfamily. Classic translation factor GTPase family. PrfC subfamily.

It localises to the cytoplasm. In terms of biological role, increases the formation of ribosomal termination complexes and stimulates activities of RF-1 and RF-2. It binds guanine nucleotides and has strong preference for UGA stop codons. It may interact directly with the ribosome. The stimulation of RF-1 and RF-2 is significantly reduced by GTP and GDP, but not by GMP. The protein is Peptide chain release factor 3 of Shigella flexneri serotype 5b (strain 8401).